The primary structure comprises 179 residues: MAREGLGLEITELRLGLSCGEPKKNEKKRMFSEIDGGVEENGGSGDRKSVDKKNQVVGWPPVCSYRKKNMNEGSKMYMKVSMDGAPYLRKIDLCLHKGYLELALALEKLFDCCGIEEALKDAENCEHVPIYEDKDGDWMLVGDVPWEMFIESCKRLRIMKRSDAKGFDLQPKGSLKRFI.

The EAR-like (transcriptional repression) motif lies at 13–17 (LRLGL). A disordered region spans residues 31-52 (FSEIDGGVEENGGSGDRKSVDK). Positions 75 to 163 (KMYMKVSMDG…KRLRIMKRSD (89 aa)) constitute a PB1 domain.

Belongs to the Aux/IAA family. Homodimers and heterodimers.

It is found in the nucleus. Aux/IAA proteins are short-lived transcriptional factors that function as repressors of early auxin response genes at low auxin concentrations. Repression is thought to result from the interaction with auxin response factors (ARFs), proteins that bind to the auxin-responsive promoter element (AuxRE). Formation of heterodimers with ARF proteins may alter their ability to modulate early auxin response genes expression. This Pisum sativum (Garden pea) protein is Auxin-induced protein IAA6 (IAA6).